The following is a 72-amino-acid chain: Translation initiation factor IF-1 (72 aa).

Residues 1-72 (MAKDDVIEVE…TRGRITYRYK (72 aa)) form the S1-like domain. The residue at position 60 (Tyr-60) is a Phosphotyrosine.

It belongs to the IF-1 family. In terms of assembly, component of the 30S ribosomal translation pre-initiation complex which assembles on the 30S ribosome in the order IF-2 and IF-3, IF-1 and N-formylmethionyl-tRNA(fMet); mRNA recruitment can occur at any time during PIC assembly.

Its subcellular location is the cytoplasm. Functionally, one of the essential components for the initiation of protein synthesis. Stabilizes the binding of IF-2 and IF-3 on the 30S subunit to which N-formylmethionyl-tRNA(fMet) subsequently binds. Helps modulate mRNA selection, yielding the 30S pre-initiation complex (PIC). Upon addition of the 50S ribosomal subunit IF-1, IF-2 and IF-3 are released leaving the mature 70S translation initiation complex. The chain is Translation initiation factor IF-1 from Bacillus licheniformis (strain ATCC 14580 / DSM 13 / JCM 2505 / CCUG 7422 / NBRC 12200 / NCIMB 9375 / NCTC 10341 / NRRL NRS-1264 / Gibson 46).